Consider the following 204-residue polypeptide: Small ribosomal subunit protein uS7 (204 aa).

Met-1 bears the N-acetylmethionine mark. Thr-2 carries the N-acetylthreonine; in 40S ribosomal protein S5, N-terminally processed modification. A Phosphothreonine modification is found at Thr-14. An N6-acetyllysine; alternate modification is found at Lys-47. Lys-47 participates in a covalent cross-link: Glycyl lysine isopeptide (Lys-Gly) (interchain with G-Cter in SUMO2); alternate. Ser-142 carries the post-translational modification Phosphoserine.

This sequence belongs to the universal ribosomal protein uS7 family. As to quaternary structure, component of the small ribosomal subunit. Part of the small subunit (SSU) processome, composed of more than 70 proteins and the RNA chaperone small nucleolar RNA (snoRNA) U3.

It localises to the cytoplasm. The protein resides in the nucleus. The protein localises to the nucleolus. In terms of biological role, component of the small ribosomal subunit. The ribosome is a large ribonucleoprotein complex responsible for the synthesis of proteins in the cell. Part of the small subunit (SSU) processome, first precursor of the small eukaryotic ribosomal subunit. During the assembly of the SSU processome in the nucleolus, many ribosome biogenesis factors, an RNA chaperone and ribosomal proteins associate with the nascent pre-rRNA and work in concert to generate RNA folding, modifications, rearrangements and cleavage as well as targeted degradation of pre-ribosomal RNA by the RNA exosome. This is Small ribosomal subunit protein uS7 (Rps5) from Mus musculus (Mouse).